Here is a 59-residue protein sequence, read N- to C-terminus: Putative potassium channel toxin Ts23 (59 aa).

The signal sequence occupies residues 1–22 (MKAFYGILIIFILISMLDLSQQ). Disulfide bonds link Cys29/Cys50, Cys35/Cys55, and Cys39/Cys57.

It belongs to the short scorpion toxin superfamily. Potassium channel inhibitor family. Alpha-KTx 04 subfamily. As to expression, expressed by the venom gland.

It localises to the secreted. Its function is as follows. Potently blocks Kv1.1/KCNA1 (85%), Kv1.2/KCNA2 (91%), Kv1.3/KCNA3 (89%), Kv1.6/KCNA6 (94%), and Shaker (97%). The chain is Putative potassium channel toxin Ts23 from Tityus serrulatus (Brazilian scorpion).